A 124-amino-acid polypeptide reads, in one-letter code: UPF0102 protein HEAR0176 (124 aa).

This sequence belongs to the UPF0102 family.

This Herminiimonas arsenicoxydans protein is UPF0102 protein HEAR0176.